The chain runs to 575 residues: Chaperonin CPN60-1, mitochondrial (575 aa).

Residues methionine 1 to tyrosine 32 constitute a mitochondrion transit peptide.

The protein belongs to the chaperonin (HSP60) family.

The protein resides in the mitochondrion. In terms of biological role, implicated in mitochondrial protein import and macromolecular assembly. May facilitate the correct folding of imported proteins. May also prevent misfolding and promote the refolding and proper assembly of unfolded polypeptides generated under stress conditions in the mitochondrial matrix. The chain is Chaperonin CPN60-1, mitochondrial (CPN60-1) from Cucurbita maxima (Pumpkin).